A 277-amino-acid polypeptide reads, in one-letter code: Large ribosomal subunit protein uL2 (277 aa).

The disordered stretch occupies residues 222–277; the sequence is GVAMNPVDHPHGGGEGRTSGGRHPVTPWGKPTKGKKTRSNKATDKFIMRSRHQRKK.

It belongs to the universal ribosomal protein uL2 family. In terms of assembly, part of the 50S ribosomal subunit. Forms a bridge to the 30S subunit in the 70S ribosome.

One of the primary rRNA binding proteins. Required for association of the 30S and 50S subunits to form the 70S ribosome, for tRNA binding and peptide bond formation. It has been suggested to have peptidyltransferase activity; this is somewhat controversial. Makes several contacts with the 16S rRNA in the 70S ribosome. In Brucella ovis (strain ATCC 25840 / 63/290 / NCTC 10512), this protein is Large ribosomal subunit protein uL2.